Reading from the N-terminus, the 100-residue chain is MNQRQLMQMAQQMQRQMQKVQEELAATIVEGTAGGGAIVVKMNGHREVQSITISPEVVDPNDVDMLQDLLLVAINDASRKAQQLAEERMQPLTGGLKGLF.

This sequence belongs to the YbaB/EbfC family. Homodimer.

The protein localises to the cytoplasm. Its subcellular location is the nucleoid. Functionally, binds to DNA and alters its conformation. May be involved in regulation of gene expression, nucleoid organization and DNA protection. The chain is Nucleoid-associated protein Cagg_3200 from Chloroflexus aggregans (strain MD-66 / DSM 9485).